The sequence spans 193 residues: Probable GTP-binding protein EngB (193 aa).

The EngB-type G domain occupies 22-193; the sequence is GLPEFAFAGR…LIAVLESYLA (172 aa). GTP is bound by residues 30 to 37, 57 to 61, 75 to 78, 142 to 145, and 173 to 175; these read GRSNVGKS, GKTQG, DLPG, TKID, and FSS. S37 and T59 together coordinate Mg(2+).

This sequence belongs to the TRAFAC class TrmE-Era-EngA-EngB-Septin-like GTPase superfamily. EngB GTPase family. The cofactor is Mg(2+).

Its function is as follows. Necessary for normal cell division and for the maintenance of normal septation. This chain is Probable GTP-binding protein EngB, found in Desulfotalea psychrophila (strain LSv54 / DSM 12343).